Reading from the N-terminus, the 512-residue chain is GMP synthase [glutamine-hydrolyzing] (512 aa).

The Glutamine amidotransferase type-1 domain occupies asparagine 3 to threonine 196. Cysteine 80 functions as the Nucleophile in the catalytic mechanism. Active-site residues include histidine 169 and glutamate 171. Residues tryptophan 197 to arginine 387 enclose the GMPS ATP-PPase domain. Serine 225–serine 231 contributes to the ATP binding site.

In terms of assembly, homodimer.

The catalysed reaction is XMP + L-glutamine + ATP + H2O = GMP + L-glutamate + AMP + diphosphate + 2 H(+). It participates in purine metabolism; GMP biosynthesis; GMP from XMP (L-Gln route): step 1/1. Functionally, catalyzes the synthesis of GMP from XMP. In Chlamydia muridarum (strain MoPn / Nigg), this protein is GMP synthase [glutamine-hydrolyzing] (guaA).